We begin with the raw amino-acid sequence, 3326 residues long: Protein unc-80 homolog (3326 aa).

Residues 152–164 (IENQGSPGQPCRS) show a composition bias toward polar residues. Disordered stretches follow at residues 152–178 (IENQGSPGQPCRSSSHDEEENNRRKTF), 243–267 (KRSSPINSQSQTCESPNQDTRQQGE), 283–317 (PKATISGCHQGNSFDGSLSSQTSQERGPSHSRASL), and 450–469 (RKEDRERKGSIPFHHTGKRR). Phosphoserine is present on S257. Over residues 283–308 (PKATISGCHQGNSFDGSLSSQTSQER) the composition is skewed to polar residues. The residue at position 526 (S526) is a Phosphoserine. 5 disordered regions span residues 536–560 (LSARHSHSHHTLVSDLPDHSNSHGE), 697–785 (RKKS…DNIP), 967–1076 (GKKV…SRRI), 1405–1430 (EDSKDSLHSSSHTIKSDAGAEEKKVP), and 1469–1516 (SSKL…LSNA). Composition is skewed to basic and acidic residues over residues 551–560 (LPDHSNSHGE) and 699–713 (KSENKENESVEKRPS). Over residues 723–737 (SSSSTSGFGAPSASG) the composition is skewed to low complexity. Positions 738–770 (AGDGGGEEGGGGDGGGGGGGGDGGGGGGGGGGP) are enriched in gly residues. Residues 772–783 (EKNEKNQEKDDN) are compositionally biased toward basic and acidic residues. A compositionally biased stretch (low complexity) spans 1038-1055 (SQSAASDTSSQSEQDTSE). The segment covering 1418 to 1429 (IKSDAGAEEKKV) has biased composition (basic and acidic residues). 2 consecutive transmembrane segments (helical) span residues 2336–2356 (PFVLQLFASVAPLLEFPDAAN) and 2466–2486 (IAATAALATSLQALLYSVEVL). Residues 2493–2515 (PQMSRSDQGHKGTTTANHTMSSG) are disordered. 2 helical membrane passes run 2853–2873 (GLAESTSQAAYLALKVILVCF) and 2899–2919 (LALWDFLDFIVRTRIPIFVLL). The segment covering 3010 to 3032 (NTGTGTVWEQDSEPSQQASQDTL) has biased composition (polar residues). The disordered stretch occupies residues 3010–3052 (NTGTGTVWEQDSEPSQQASQDTLSRTDEEDEENDSVSMPSVVS). Phosphoserine is present on S3110. Disordered stretches follow at residues 3122–3222 (LQQP…VLTS), 3236–3271 (PKQSEPLLAEEGEKKEDEEIQGATAHCPLSTQLSDP), and 3296–3326 (NGTENPLLSSQFTFTPPELGDTDSALDESHV). Over residues 3127-3136 (GRKRGLRQLR) the composition is skewed to basic residues. Residues 3157–3168 (LSTTRRSIQPKT) are compositionally biased toward polar residues. Residues 3298-3309 (TENPLLSSQFTF) show a composition bias toward polar residues. Acidic residues predominate over residues 3315-3326 (GDTDSALDESHV).

It belongs to the unc-80 family. NALCN complex consists of NALCN and auxiliary subunits, UNC79, UNC80 and NACL1. These auxiliary subunits are essential for the NALCN complex function. Interacts (via N-terminus half) with NALCN; this interaction facilitates NALCN surface localization. Interacts (via C-terminus) with UNC79. UNC80 bridges NALCN to UNC79. Post-translationally, phosphorylated on tyrosine residues. In terms of tissue distribution, expressed almost exclusively in the brain. Expressed in hippocampus and ventral tegmental area neurons.

Its subcellular location is the cell membrane. It localises to the cell projection. The protein resides in the dendrite. In terms of biological role, auxiliary subunit of the NALCN sodium channel complex. The NALCN sodium channel complex is a voltage-gated ion channel responsible for the resting Na(+) permeability that controls neuronal excitability. This complex is activated by neuropeptides substance P, neurotensin. In addition, the channel is inhibited by extracellular Ca(2+) through the Ca(2+)-sensing receptor. UNC80 is essential for NALCN sensitivity to extracellular calcium. This Mus musculus (Mouse) protein is Protein unc-80 homolog (Unc80).